The sequence spans 439 residues: MNKKFYITTLGCPKNTADSMSMHHSLLEEGFTPATFAEESDFHFINTCTFIQSATEETIQTILSAAQVKKQNHQKLVVVGCFAERYPDNISSEIPEVDLFFGTGRYAQAGKILREKFPDLSPPKREFNDSLLERLKLSSEIENYSKPYAYVKVSDGCNRGCSFCIIPSFRGKFRESPVEDILRDVDRAIRAGAKEICLVSQDTVYYGRNSEVLLDMVRKVAEIDSLEVLRLLYLYPDKKTEKLLRLMGETPKIAPYLESPLQHVSSKILKSMNRVGESSTFKDLFALAREVKPGLEIRTSFIIGYPGEEPGDVDQVLRFIEETRPEKVNLFSYSPQEGTKGAELKQTVSEKEKSRRINLIRDVHLAILEEIHESRIGQTYDAIVDSVENDQAVVRRFQDAPEMDEVVYVDDISLIPGMIGKIRIDSFYEYDMNGTWISK.

Positions 3–118 (KKFYITTLGC…AGKILREKFP (116 aa)) constitute an MTTase N-terminal domain. [4Fe-4S] cluster-binding residues include C12, C48, C81, C157, C161, and C164. In terms of domain architecture, Radical SAM core spans 143–370 (NYSKPYAYVK…RDVHLAILEE (228 aa)). The 66-residue stretch at 373–438 (ESRIGQTYDA…EYDMNGTWIS (66 aa)) folds into the TRAM domain.

The protein belongs to the methylthiotransferase family. RimO subfamily. It depends on [4Fe-4S] cluster as a cofactor.

The protein localises to the cytoplasm. It catalyses the reaction L-aspartate(89)-[ribosomal protein uS12]-hydrogen + (sulfur carrier)-SH + AH2 + 2 S-adenosyl-L-methionine = 3-methylsulfanyl-L-aspartate(89)-[ribosomal protein uS12]-hydrogen + (sulfur carrier)-H + 5'-deoxyadenosine + L-methionine + A + S-adenosyl-L-homocysteine + 2 H(+). In terms of biological role, catalyzes the methylthiolation of an aspartic acid residue of ribosomal protein uS12. This Leptospira borgpetersenii serovar Hardjo-bovis (strain L550) protein is Ribosomal protein uS12 methylthiotransferase RimO.